Consider the following 256-residue polypeptide: Rano class II histocompatibility antigen, B alpha chain (256 aa).

A signal peptide spans 1–23 (MPLSRALILGVLALTTMLSPCGG). Positions 24–111 (QDDIEADHVG…KRSNSTPAVN (88 aa)) are alpha-1. Over 24–218 (QDDIEADHVG…IPAPMSELTE (195 aa)) the chain is Extracellular. One can recognise an Ig-like C1-type domain in the interval 108–206 (PAVNEVPEAT…LDEPVLRHWE (99 aa)). The segment at 112–205 (EVPEATVFSK…SLDEPVLRHW (94 aa)) is alpha-2. An intrachain disulfide couples cysteine 134 to cysteine 190. N-linked (GlcNAc...) asparagine glycosylation is present at asparagine 145. The segment at 206–218 (EPEIPAPMSELTE) is connecting peptide. A helical membrane pass occupies residues 219-244 (TVVCALGLSVGLVGIVVGTIFIIQGL). Residues 245 to 256 (RSVAPSRHPGPL) lie on the Cytoplasmic side of the membrane.

Belongs to the MHC class II family.

It is found in the membrane. The polypeptide is Rano class II histocompatibility antigen, B alpha chain (RT1-Ba) (Rattus norvegicus (Rat)).